The following is a 638-amino-acid chain: MLQQIRGPADLQHLSQAQLRELAAEIREFLIHKVAATGGHLGPNLGVVELTLALHRVFDSPHDPIIFDTGHQAYVHKMLTGRSQDFATLRKKGGLSGYPSRAESEHDWVESSHASAALSYADGLAKAFELTGHRNRHVVAVVGDGALTGGMCWEALNNIAASRRPVIIVVNDNGRSYAPTIGGVADHLATLRLQPAYEQALETGRDLVRAVPLVGGLWFRFLHSVKAGIKDSLSPQLLFTDLGLKYVGPVDGHDERAVEVALRSARRFGAPVIVHVVTRKGMGYPPAEADQAEQMHSTVPIDPATGQATKVAGPGWTATFSDALIGYAQKRRDIVAITAAMPGPTGLTAFGQRFPDRLFDVGIAEQHAMTSAAGLAMGGLHPVVAIYSTFLNRAFDQIMMDVALHKLPVTMVLDRAGITGSDGASHNGMWDLSMLGIVPGIRVAAPRDATRLREELGEALDVDDGPTALRFPKGDVGEDISALERRGGVDVLAAPADGLNHDVLLVAIGAFAPMALAVAKRLHNQGIGVTVIDPRWVLPVSDGVRELAVQHKLLVTLEDNGVNGGAGSAVSAALRRAEIDVPCRDVGLPQEFYEHASRSEVLADLGLTDQDVARRITGWVAALGTGVCASDAIPEHLD.

Residues histidine 71 and 112–114 (SHA) each bind thiamine diphosphate. Position 144 (aspartate 144) interacts with Mg(2+). Thiamine diphosphate is bound by residues 145–146 (GA), asparagine 173, tyrosine 284, and glutamate 365. A Mg(2+)-binding site is contributed by asparagine 173.

It belongs to the transketolase family. DXPS subfamily. As to quaternary structure, homodimer. The cofactor is Mg(2+). Requires thiamine diphosphate as cofactor.

It carries out the reaction D-glyceraldehyde 3-phosphate + pyruvate + H(+) = 1-deoxy-D-xylulose 5-phosphate + CO2. It participates in metabolic intermediate biosynthesis; 1-deoxy-D-xylulose 5-phosphate biosynthesis; 1-deoxy-D-xylulose 5-phosphate from D-glyceraldehyde 3-phosphate and pyruvate: step 1/1. In terms of biological role, catalyzes the acyloin condensation reaction between C atoms 2 and 3 of pyruvate and glyceraldehyde 3-phosphate to yield 1-deoxy-D-xylulose-5-phosphate (DXP). The protein is 1-deoxy-D-xylulose-5-phosphate synthase of Mycobacterium bovis (strain ATCC BAA-935 / AF2122/97).